A 319-amino-acid polypeptide reads, in one-letter code: ATP-dependent 6-phosphofructokinase (319 aa).

Residue Gly11 coordinates ATP. Residue 21–25 (RAVVR) participates in ADP binding. ATP-binding positions include 72-73 (RY) and 102-105 (GDGS). Asp103 contributes to the Mg(2+) binding site. 125–127 (TID) lines the substrate pocket. Asp127 serves as the catalytic Proton acceptor. Arg154 contacts ADP. Substrate-binding positions include Arg162 and 169–171 (MGR). Residues 185-187 (GAE), Arg211, and 213-215 (KKH) each bind ADP. Substrate-binding positions include Glu222, Arg243, and 249 to 252 (HVQR).

Belongs to the phosphofructokinase type A (PFKA) family. ATP-dependent PFK group I subfamily. Prokaryotic clade 'B1' sub-subfamily. In terms of assembly, homotetramer. The cofactor is Mg(2+).

The protein resides in the cytoplasm. The catalysed reaction is beta-D-fructose 6-phosphate + ATP = beta-D-fructose 1,6-bisphosphate + ADP + H(+). The protein operates within carbohydrate degradation; glycolysis; D-glyceraldehyde 3-phosphate and glycerone phosphate from D-glucose: step 3/4. Allosterically activated by ADP and other diphosphonucleosides, and allosterically inhibited by phosphoenolpyruvate. Catalyzes the phosphorylation of D-fructose 6-phosphate to fructose 1,6-bisphosphate by ATP, the first committing step of glycolysis. This chain is ATP-dependent 6-phosphofructokinase, found in Listeria monocytogenes serotype 4a (strain HCC23).